We begin with the raw amino-acid sequence, 30 residues long: Photosystem I reaction center subunit XII (30 aa).

Residues 5–25 traverse the membrane as a helical segment; that stretch reads SQIFFALCIALTAAVLAIGLG.

The protein belongs to the PsaM family.

It is found in the plastid. It localises to the chloroplast thylakoid membrane. The chain is Photosystem I reaction center subunit XII from Emiliania huxleyi (Coccolithophore).